A 77-amino-acid chain; its full sequence is Translation initiation factor IF-1, chloroplastic (77 aa).

Residues Met-1–Arg-71 form the S1-like domain.

The protein belongs to the IF-1 family. In terms of assembly, component of the 30S ribosomal translation pre-initiation complex which assembles on the 30S ribosome in the order IF-2 and IF-3, IF-1 and N-formylmethionyl-tRNA(fMet); mRNA recruitment can occur at any time during PIC assembly.

It is found in the plastid. The protein localises to the chloroplast. Functionally, one of the essential components for the initiation of protein synthesis. Stabilizes the binding of IF-2 and IF-3 on the 30S subunit to which N-formylmethionyl-tRNA(fMet) subsequently binds. Helps modulate mRNA selection, yielding the 30S pre-initiation complex (PIC). Upon addition of the 50S ribosomal subunit IF-1, IF-2 and IF-3 are released leaving the mature 70S translation initiation complex. The protein is Translation initiation factor IF-1, chloroplastic of Calycanthus floridus var. glaucus (Eastern sweetshrub).